The sequence spans 331 residues: Adenosine deaminase (331 aa).

The Zn(2+) site is built by H12 and H14. 3 residues coordinate substrate: H14, D16, and G170. H197 provides a ligand contact to Zn(2+). The active-site Proton donor is the E200. A Zn(2+)-binding site is contributed by D278.

This sequence belongs to the metallo-dependent hydrolases superfamily. Adenosine and AMP deaminases family. Adenosine deaminase subfamily. Zn(2+) serves as cofactor.

It catalyses the reaction adenosine + H2O + H(+) = inosine + NH4(+). The catalysed reaction is 2'-deoxyadenosine + H2O + H(+) = 2'-deoxyinosine + NH4(+). Its function is as follows. Catalyzes the hydrolytic deamination of adenosine and 2-deoxyadenosine. The sequence is that of Adenosine deaminase from Vibrio vulnificus (strain YJ016).